The chain runs to 222 residues: Pre-mRNA cleavage factor Im 25 kDa subunit 1 (222 aa).

In terms of domain architecture, Nudix hydrolase spans 67-194 (GLRTCVEAVL…KLLAVPLCQL (128 aa)). Residues 94–96 (SIF) form an interaction with RNA region. The short motif at 101 to 122 (GRLRPGESDIEGLKRKLASKLS) is the Nudix box element.

This sequence belongs to the Nudix hydrolase family. CPSF5 subfamily. Homodimer. Component of the cleavage factor Im (CFIm) complex. Forms a complex with cleavage and polyadenylation specificity factor (CPSF) subunits FIPS5.

The protein localises to the nucleus. Functionally, component of the cleavage factor Im (CFIm) complex that plays a key role in pre-mRNA 3'-processing. Involved in association with CPSF6 or CPSF7 in pre-MRNA 3'-end poly(A) site cleavage and poly(A) addition. NUDT21/CPSF5 binds to cleavage and polyadenylation RNA substrates. The homodimer mediates simultaneous sequence-specific recognition of two 5'-UGUA-3' elements within the pre-mRNA. Binds to, but does not hydrolyze mono- and di-adenosine nucleotides. May have a role in mRNA export. The chain is Pre-mRNA cleavage factor Im 25 kDa subunit 1 from Arabidopsis thaliana (Mouse-ear cress).